The following is a 63-amino-acid chain: Beta-defensin 6 (63 aa).

Residues 1–22 (MKIHYLLFAFILVMLSPLAAFS) form the signal peptide. Position 23 is a pyrrolidone carboxylic acid (Gln23). Cystine bridges form between Cys31–Cys59, Cys38–Cys52, and Cys42–Cys60.

Belongs to the beta-defensin family. In terms of tissue distribution, predominantly expressed in skeletal muscle, also expressed in esophagus, tongue, and trachea. Also expressed in lung when induced by lipopolysaccharide.

It localises to the secreted. In terms of biological role, has potent antibacterial activity against E.coli (ATCC 25922). The chain is Beta-defensin 6 (Defb6) from Mus musculus (Mouse).